A 304-amino-acid chain; its full sequence is Elongation factor Ts (304 aa).

The segment at 80–83 is involved in Mg(2+) ion dislocation from EF-Tu; that stretch reads TDFV.

This sequence belongs to the EF-Ts family.

It is found in the cytoplasm. Associates with the EF-Tu.GDP complex and induces the exchange of GDP to GTP. It remains bound to the aminoacyl-tRNA.EF-Tu.GTP complex up to the GTP hydrolysis stage on the ribosome. This chain is Elongation factor Ts, found in Clostridium tetani (strain Massachusetts / E88).